The chain runs to 143 residues: Spliceosomal protein DIB1 (143 aa).

The residue at position 2 (Ala-2) is an N-acetylalanine.

This sequence belongs to the DIM1 family. In terms of assembly, component of the U4/U6-U5 tri-snRNP complex composed of the U4, U6 and U5 snRNAs and at least PRP3, PRP4, PRP6, PRP8, PRP18, PRP31, PRP38, SNU13, SNU23, SNU66, SNU114, SPP381, SMB1, SMD1, SMD2, SMD3, SMX2, SMX3, LSM2, LSM3, LSM4, LSM5, LSM6, LSM7, LSM8, BRR2 and DIB1.

Its subcellular location is the nucleus. Its function is as follows. Essential role in pre-mRNA splicing. Also essential for entry into mitosis (G2/M progression) as well as for chromosome segregation during mitosis. This Saccharomyces cerevisiae (strain ATCC 204508 / S288c) (Baker's yeast) protein is Spliceosomal protein DIB1 (DIB1).